Consider the following 136-residue polypeptide: ATP synthase F(0) complex subunit C1, mitochondrial (136 aa).

Residues M1–R61 constitute a mitochondrion transit peptide. Residues V77–Y97 form a helical membrane-spanning segment. Residue K104 is modified to N6,N6,N6-trimethyllysine. The chain crosses the membrane as a helical span at residues I112–I132.

Belongs to the ATPase C chain family. In terms of assembly, homooctamer; the c-ring consists of eight c subunits forming a circle, and each subunit adopts a hairpin shape. Component of the ATP synthase complex composed at least of ATP5F1A/subunit alpha, ATP5F1B/subunit beta, ATP5MC1/subunit c (homooctomer), MT-ATP6/subunit a, MT-ATP8/subunit 8, ATP5ME/subunit e, ATP5MF/subunit f, ATP5MG/subunit g, ATP5MK/subunit k, ATP5MJ/subunit j, ATP5F1C/subunit gamma, ATP5F1D/subunit delta, ATP5F1E/subunit epsilon, ATP5PF/subunit F6, ATP5PB/subunit b, ATP5PD/subunit d, ATP5PO/subunit OSCP. ATP synthase complex consists of a soluble F(1) head domain (subunits alpha(3) and beta(3)) - the catalytic core - and a membrane F(0) domain - the membrane proton channel (subunits c, a, 8, e, f, g, k and j). These two domains are linked by a central stalk (subunits gamma, delta, and epsilon) rotating inside the F1 region and a stationary peripheral stalk (subunits F6, b, d, and OSCP). Interacts with TMEM70 (homooligomer form); this interaction facilitates the oligomer formation of subunit c/ATP5MC1 (c-ring) and the c-ring membrane insertion and also protects ATP5MC1 against intramitochondrial proteolysis. In terms of processing, trimethylated by ATPSCKMT at Lys-104. Methylation is required for proper incorporation of the C subunit into the ATP synthase complex and mitochondrial respiration.

It localises to the mitochondrion membrane. It carries out the reaction H(+)(in) = H(+)(out). Subunit c, of the mitochondrial membrane ATP synthase complex (F(1)F(0) ATP synthase or Complex V) that produces ATP from ADP in the presence of a proton gradient across the membrane which is generated by electron transport complexes of the respiratory chain. ATP synthase complex consist of a soluble F(1) head domain - the catalytic core - and a membrane F(1) domain - the membrane proton channel. These two domains are linked by a central stalk rotating inside the F(1) region and a stationary peripheral stalk. During catalysis, ATP synthesis in the catalytic domain of F(1) is coupled via a rotary mechanism of the central stalk subunits to proton translocation. With the subunit a (MT-ATP6), forms the proton-conducting channel in the F(0) domain, that contains two crucial half-channels (inlet and outlet) that facilitate proton movement from the mitochondrial intermembrane space (IMS) into the matrix. Protons are taken up via the inlet half-channel and released through the outlet half-channel, following a Grotthuss mechanism. This Ovis aries (Sheep) protein is ATP synthase F(0) complex subunit C1, mitochondrial.